Here is a 68-residue protein sequence, read N- to C-terminus: Large ribosomal subunit protein uL29 (68 aa).

It belongs to the universal ribosomal protein uL29 family.

This Streptococcus suis (strain 98HAH33) protein is Large ribosomal subunit protein uL29.